A 198-amino-acid polypeptide reads, in one-letter code: Transcription factor LBX2 (198 aa).

Disordered stretches follow at residues 24-46, 63-89, and 173-198; these read MVPRAPSAPQLPESGPGPTSPLC, ALQPSEGRAGPDALGPGPFGRKRRKSR, and DPGLCLGPAGPDSRPHLSDEEIQVDD. The segment at residues 85–144 is a DNA-binding region (homeobox); that stretch reads RRKSRTAFTAQQVLELERRFVFQKYLAPSERDGLATRLGLANAQVVTWFQNRRAKLKRDV.

The protein localises to the nucleus. Transcription factor. In Homo sapiens (Human), this protein is Transcription factor LBX2 (LBX2).